The primary structure comprises 490 residues: Glutamyl-tRNA(Gln) amidotransferase subunit A (490 aa).

Catalysis depends on charge relay system residues Lys-78 and Ser-153. The active-site Acyl-ester intermediate is Ser-177.

It belongs to the amidase family. GatA subfamily. Heterotrimer of A, B and C subunits.

It carries out the reaction L-glutamyl-tRNA(Gln) + L-glutamine + ATP + H2O = L-glutaminyl-tRNA(Gln) + L-glutamate + ADP + phosphate + H(+). Its function is as follows. Allows the formation of correctly charged Gln-tRNA(Gln) through the transamidation of misacylated Glu-tRNA(Gln) in organisms which lack glutaminyl-tRNA synthetase. The reaction takes place in the presence of glutamine and ATP through an activated gamma-phospho-Glu-tRNA(Gln). In Bdellovibrio bacteriovorus (strain ATCC 15356 / DSM 50701 / NCIMB 9529 / HD100), this protein is Glutamyl-tRNA(Gln) amidotransferase subunit A.